A 63-amino-acid chain; its full sequence is Transmembrane protein 033R (63 aa).

This is Transmembrane protein 033R from Dryophytes versicolor (chameleon treefrog).